The primary structure comprises 176 residues: Methylated-DNA--protein-cysteine methyltransferase (176 aa).

The Nucleophile; methyl group acceptor role is filled by cysteine 142.

It belongs to the MGMT family.

Its subcellular location is the cytoplasm. It catalyses the reaction a 6-O-methyl-2'-deoxyguanosine in DNA + L-cysteinyl-[protein] = S-methyl-L-cysteinyl-[protein] + a 2'-deoxyguanosine in DNA. The catalysed reaction is a 4-O-methyl-thymidine in DNA + L-cysteinyl-[protein] = a thymidine in DNA + S-methyl-L-cysteinyl-[protein]. Its function is as follows. Involved in the cellular defense against the biological effects of O6-methylguanine (O6-MeG) and O4-methylthymine (O4-MeT) in DNA. Repairs the methylated nucleobase in DNA by stoichiometrically transferring the methyl group to a cysteine residue in the enzyme. This is a suicide reaction: the enzyme is irreversibly inactivated. The chain is Methylated-DNA--protein-cysteine methyltransferase from Methanothermobacter thermautotrophicus (strain ATCC 29096 / DSM 1053 / JCM 10044 / NBRC 100330 / Delta H) (Methanobacterium thermoautotrophicum).